The sequence spans 514 residues: L-carnitine/gamma-butyrobetaine antiporter (514 aa).

The Cytoplasmic segment spans residues Met1–Glu11. A helical membrane pass occupies residues Pro12–Val30. Residues Arg31 to Ala42 lie on the Periplasmic side of the membrane. Residues Val43–Trp68 traverse the membrane as a helical segment. The Cytoplasmic segment spans residues Leu69–Trp91. The chain crosses the membrane as a helical span at residues Ile92–Ile112. The Periplasmic segment spans residues Tyr113–Lys131. Residues Glu132 to Ser154 form a helical membrane-spanning segment. Over Val155–Asn185 the chain is Cytoplasmic. The helical transmembrane segment at Gly186–Thr216 threads the bilayer. Residues Glu217–Gln230 are Periplasmic-facing. A helical transmembrane segment spans residues Leu231–Phe249. Topologically, residues Gly250–Leu251 are cytoplasmic. The helical transmembrane segment at Gln252 to Gly277 threads the bilayer. Topologically, residues Gly278–Gly311 are periplasmic. The helical transmembrane segment at Phe312–Leu335 threads the bilayer. Residues Ala336 to Leu347 lie on the Cytoplasmic side of the membrane. Residues Cys348–Asn369 traverse the membrane as a helical segment. The Periplasmic segment spans residues Thr370–Ser404. Residues Thr405–Thr434 traverse the membrane as a helical segment. The Cytoplasmic segment spans residues Cys435–Pro445. A helical transmembrane segment spans residues Leu446–Leu464. The Periplasmic segment spans residues Ala465–Gly468. A helical membrane pass occupies residues Leu469–Leu492. Residues Ser493–His514 lie on the Cytoplasmic side of the membrane.

Belongs to the BCCT transporter (TC 2.A.15) family. CaiT subfamily. As to quaternary structure, homotrimer.

The protein resides in the cell inner membrane. The enzyme catalyses 4-(trimethylamino)butanoate(in) + (R)-carnitine(out) = 4-(trimethylamino)butanoate(out) + (R)-carnitine(in). It functions in the pathway amine and polyamine metabolism; carnitine metabolism. In terms of biological role, catalyzes the exchange of L-carnitine for gamma-butyrobetaine. The protein is L-carnitine/gamma-butyrobetaine antiporter of Proteus mirabilis (strain HI4320).